The following is a 423-amino-acid chain: Glutamate-1-semialdehyde 2,1-aminomutase (423 aa).

Lysine 258 bears the N6-(pyridoxal phosphate)lysine mark.

It belongs to the class-III pyridoxal-phosphate-dependent aminotransferase family. HemL subfamily. Pyridoxal 5'-phosphate serves as cofactor.

It localises to the cytoplasm. It catalyses the reaction (S)-4-amino-5-oxopentanoate = 5-aminolevulinate. The protein operates within porphyrin-containing compound metabolism; protoporphyrin-IX biosynthesis; 5-aminolevulinate from L-glutamyl-tRNA(Glu): step 2/2. The protein is Glutamate-1-semialdehyde 2,1-aminomutase of Pyrobaculum arsenaticum (strain DSM 13514 / JCM 11321 / PZ6).